The chain runs to 120 residues: UPF0344 protein LMOf2365_2298 (120 aa).

The next 4 membrane-spanning stretches (helical) occupy residues 3-23 (GYIHLISWVAIVVLTVTALLI), 33-53 (MLQMINRVFYILVILSGIMMV), 62-82 (ILAIFKILMGIIVIGVVEMLL), and 92-112 (GMFLMIFVIVVVITISLGFYL).

The protein belongs to the UPF0344 family.

The protein localises to the cell membrane. The chain is UPF0344 protein LMOf2365_2298 from Listeria monocytogenes serotype 4b (strain F2365).